The sequence spans 284 residues: uncharacterized protein (284 aa).

Topologically, residues 1 to 8 are cytoplasmic; the sequence is MLWKVSKM. Residues 9-25 form a helical membrane-spanning segment; it reads FLGGLVALTTISVATLY. The Extracellular segment spans residues 26-80; sequence HYQNRLVYPSWAQGARNHVDTPDSRGIPYEKLTLITQDHIKLEAWDIKNENSTST. A helical transmembrane segment spans residues 81–101; it reads VLILCPNAGNIGYFILIIDIF. Residues 102–284 are Cytoplasmic-facing; the sequence is YRQFGMSVFI…RDFLIEKGFI (183 aa).

It to S.pombe bem46 and M.tuberculosis Rv2307c.

It is found in the mitochondrion membrane. This is an uncharacterized protein from Saccharomyces cerevisiae (strain ATCC 204508 / S288c) (Baker's yeast).